A 714-amino-acid chain; its full sequence is GATA zinc finger domain-containing protein 10 (714 aa).

Disordered regions lie at residues 28 to 97 (YIQQ…NKQI), 115 to 180 (TMPH…QQQQ), 266 to 362 (MPMN…QQQQ), 394 to 419 (QQQQ…ESMD), 454 to 476 (MHLQ…QQIQ), and 528 to 621 (IQQQ…RRRT). 2 stretches are compositionally biased toward low complexity: residues 30 to 94 (QQQQ…NNNN) and 130 to 147 (QQQQ…QHPH). A compositionally biased stretch (basic residues) spans 148 to 168 (QQQHPHQQQHPHQQQHPHQQQ). Residues 169 to 180 (HPHQQQIQQQQQ) are compositionally biased toward low complexity. Over residues 271–282 (GGNSRKNSFDMY) the composition is skewed to polar residues. 2 stretches are compositionally biased toward low complexity: residues 283–322 (NNNN…NNNI) and 340–362 (QHQQ…QQQQ). Composition is skewed to low complexity over residues 457–476 (QQQQ…QQIQ) and 528–549 (IQQQ…TPNN). Positions 550-569 (GSPSSSDGKSPVNSNTAITS) are enriched in polar residues. The segment covering 570 to 588 (NNNNNNNNNNNNNNNNNNN) has biased composition (low complexity). The GATA-type zinc finger occupies 631–656 (CHYCEVTETPEWRRGPDGDHTLCNAC). The stretch at 661-694 (AKSQKKLAREKELEKQKELEREKERENTRKHSID) forms a coiled coil. Over residues 667–693 (LAREKELEKQKELEREKERENTRKHSI) the composition is skewed to basic and acidic residues. A disordered region spans residues 667 to 714 (LAREKELEKQKELEREKERENTRKHSIDFMLMNDTSSAPTNSQNPTPN). The span at 699-714 (NDTSSAPTNSQNPTPN) shows a compositional bias: polar residues.

The protein is GATA zinc finger domain-containing protein 10 (gtaJ) of Dictyostelium discoideum (Social amoeba).